The chain runs to 303 residues: UDP-3-O-acyl-N-acetylglucosamine deacetylase (303 aa).

Positions 78, 237, and 241 each coordinate Zn(2+). His-264 acts as the Proton donor in catalysis.

It belongs to the LpxC family. The cofactor is Zn(2+).

The enzyme catalyses a UDP-3-O-[(3R)-3-hydroxyacyl]-N-acetyl-alpha-D-glucosamine + H2O = a UDP-3-O-[(3R)-3-hydroxyacyl]-alpha-D-glucosamine + acetate. Its pathway is glycolipid biosynthesis; lipid IV(A) biosynthesis; lipid IV(A) from (3R)-3-hydroxytetradecanoyl-[acyl-carrier-protein] and UDP-N-acetyl-alpha-D-glucosamine: step 2/6. Catalyzes the hydrolysis of UDP-3-O-myristoyl-N-acetylglucosamine to form UDP-3-O-myristoylglucosamine and acetate, the committed step in lipid A biosynthesis. This Pseudomonas fluorescens (strain Pf0-1) protein is UDP-3-O-acyl-N-acetylglucosamine deacetylase.